The following is a 194-amino-acid chain: Cysteine and glycine-rich protein 3 (194 aa).

An interaction with TCAP region spans residues 1–5 (MPNWG). Residues 10–61 (CGACEKTVYHAEEIQCNGRSFHKTCFHCMACRKALDSTTVAAHESEIYCKVC) form the LIM zinc-binding 1 domain. The Nuclear localization signal signature appears at 64–69 (RRYGPK). Residues 94-106 (QSPKQARSATTSS) are interaction with CLF2. Phosphoserine occurs at positions 95 and 153. One can recognise an LIM zinc-binding 2 domain in the interval 120 to 171 (CPRCGKSVYAAEKVMGGGKPWHKTCFRCAICGKSLESTNVTDKDGELYCKVC).

As to quaternary structure, self-associates. Oligomeric in the cytoplasm and monomeric in the nucleus. Homooligomers preferentially form along the actin cytoskeleton. Interacts with TCAP, LDHD, MYOD1, MYOG, ACTN2, NRAP, MYF6. Interacts (via N-terminus) with GLRX3 (via C-terminus) and PPP3CA; GLRX3 and calcineurin compete for interaction with CSRP3. Interacts with CFL2; the stoichiometry influences F-actin depolymerization and possibly two molecules of CFL2 can interact with one molecule of CSRP3 resulting in the highest functional impact; the interaction is stronger with phosphorylated CFL2.

It is found in the nucleus. The protein resides in the cytoplasm. It localises to the cytoskeleton. Its subcellular location is the myofibril. The protein localises to the sarcomere. It is found in the z line. Functionally, positive regulator of myogenesis. Acts as a cofactor for myogenic bHLH transcription factors such as MYOD1, and probably MYOG and MYF6. Enhances the DNA-binding activity of the MYOD1:TCF3 isoform E47 complex and may promote formation of a functional MYOD1:TCF3 isoform E47:MEF2A complex involved in myogenesis. Plays a crucial and specific role in the organization of cytosolic structures in cardiomyocytes. Could play a role in mechanical stretch sensing. May be a scaffold protein that promotes the assembly of interacting proteins at Z-line structures. It is essential for calcineurin anchorage to the Z line. Required for stress-induced calcineurin-NFAT activation. The role in regulation of cytoskeleton dynamics by association with CFL2 is reported conflictingly. Proposed to contribute to the maintenance of muscle cell integrity through an actin-based mechanism. Can directly bind to actin filaments, cross-link actin filaments into bundles without polarity selectivity and protect them from dilution- and cofilin-mediated depolymerization; the function seems to involve its self-association. In vitro can inhibit PKC/PRKCA activity. Proposed to be involved in cardiac stress signaling by down-regulating excessive PKC/PRKCA signaling. The protein is Cysteine and glycine-rich protein 3 (CSRP3) of Bos taurus (Bovine).